Consider the following 210-residue polypeptide: Methylthioribulose-1-phosphate dehydratase (210 aa).

Positions 97 and 99 each coordinate Zn(2+).

It belongs to the aldolase class II family. MtnB subfamily. Homotetramer. Zn(2+) is required as a cofactor.

It carries out the reaction 5-(methylsulfanyl)-D-ribulose 1-phosphate = 5-methylsulfanyl-2,3-dioxopentyl phosphate + H2O. It functions in the pathway amino-acid biosynthesis; L-methionine biosynthesis via salvage pathway; L-methionine from S-methyl-5-thio-alpha-D-ribose 1-phosphate: step 2/6. Functionally, catalyzes the dehydration of methylthioribulose-1-phosphate (MTRu-1-P) into 2,3-diketo-5-methylthiopentyl-1-phosphate (DK-MTP-1-P). This chain is Methylthioribulose-1-phosphate dehydratase, found in Geobacillus kaustophilus (strain HTA426).